We begin with the raw amino-acid sequence, 424 residues long: Translation initiation factor 2 subunit gamma (424 aa).

The tr-type G domain maps to leucine 23 to glutamate 220. Residues glycine 32 to threonine 39 form a G1 region. 4 residues coordinate Mg(2+): aspartate 35, threonine 39, glycine 60, and serine 62. GTP is bound at residue aspartate 35–threonine 40. Residues glycine 60 to lysine 64 form a G2 region. The interval aspartate 107–glycine 110 is G3. GTP contacts are provided by residues asparagine 163 to aspartate 166 and serine 198 to glutamine 200. A G4 region spans residues asparagine 163–aspartate 166. The segment at serine 198 to glutamine 200 is G5.

It belongs to the TRAFAC class translation factor GTPase superfamily. Classic translation factor GTPase family. EIF2G subfamily. As to quaternary structure, heterotrimer composed of an alpha, a beta and a gamma chain. Requires Mg(2+) as cofactor.

The catalysed reaction is GTP + H2O = GDP + phosphate + H(+). Its function is as follows. eIF-2 functions in the early steps of protein synthesis by forming a ternary complex with GTP and initiator tRNA. This is Translation initiation factor 2 subunit gamma from Archaeoglobus fulgidus (strain ATCC 49558 / DSM 4304 / JCM 9628 / NBRC 100126 / VC-16).